A 389-amino-acid chain; its full sequence is Radial spoke head protein 3 homolog B (389 aa).

The disordered stretch occupies residues 63–106; sequence PTGQVPGQPDPLELQRQQQARRRALARKRAQEQLKPRTPEPVEG. Basic residues predominate over residues 81–90; it reads QARRRALARK. Over residues 91 to 106 the composition is skewed to basic and acidic residues; it reads RAQEQLKPRTPEPVEG. T143 is modified (phosphothreonine; by MAPK1). Residues 206 to 242 adopt a coiled-coil conformation; it reads YEEIRNVELAEVQRLEEQERRHREEKERRKKQQWEIV. The segment at 332–389 is disordered; the sequence is EAMPPGQKTNVINGPNTVTDPSVTTLHTQKPVLDRVSSQPAPSQERKPVEEGGHLMAE. Positions 338–359 are enriched in polar residues; sequence QKTNVINGPNTVTDPSVTTLHT. Basic and acidic residues predominate over residues 375–389; that stretch reads QERKPVEEGGHLMAE.

It belongs to the flagellar radial spoke RSP3 family. Component of the axonemal radial spoke 1 (RS1) and 2 (RS2) complexes, at least composed of spoke head proteins RSPH1, RSPH3B, RSPH9 and the cilia-specific component RSPH4A or sperm-specific component RSPH6A, spoke stalk proteins RSPH14, DNAJB13, DYDC1, ROPN1L and NME5, and the RS1 complex-specific anchor protein IQUB. Interacts with IQUB. Interacts with phosphorylated MAPK1. Interacts with MEK1. Interacts with PKA regulatory subunits PRKAR1A and PRKAR1B. Interacts with RSPH1. Interacts with RSPH4A. Interacts with RSPH6A. Interacts with RSPH9. Interacts with LRRC23. As to expression, expressed in ependymal cells (at protein level).

It localises to the cytoplasm. Its subcellular location is the cytoskeleton. It is found in the cilium axoneme. The protein localises to the flagellum axoneme. Functionally, functions as part of axonemal radial spoke complexes that play an important part in the motility of sperm and cilia. Functions as a protein kinase A-anchoring protein that scaffolds the cAMP-dependent protein kinase holoenzyme. May serve as a point of convergence for MAPK and PKA signaling in cilia. This chain is Radial spoke head protein 3 homolog B (Rsph3b), found in Mus musculus (Mouse).